A 165-amino-acid chain; its full sequence is Nucleotide-binding protein PMT9312_0481 (165 aa).

The protein belongs to the YajQ family.

Nucleotide-binding protein. The polypeptide is Nucleotide-binding protein PMT9312_0481 (Prochlorococcus marinus (strain MIT 9312)).